A 695-amino-acid chain; its full sequence is uncharacterized protein (695 aa).

At S113 the chain carries Phosphoserine. 12 helical membrane-spanning segments follow: residues 237 to 257 (FPLI…SLTV), 265 to 285 (LAAV…FEGI), 313 to 333 (IAFS…SEPL), 344 to 364 (INLT…YIFF), 380 to 400 (GIYV…TLVW), 408 to 428 (FIGA…LLLF), 457 to 477 (AFSG…LTLF), 488 to 508 (AQSA…AIGI), 531 to 551 (QVGL…LVFG), 565 to 585 (VIKL…FDSL), 604 to 624 (IVNL…LSWF), and 633 to 653 (WIGI…YVLF). The span at 673–688 (EVDSDEYLTDSDDPDE) shows a compositional bias: acidic residues. Positions 673-695 (EVDSDEYLTDSDDPDENTALLGA) are disordered.

The protein belongs to the multi antimicrobial extrusion (MATE) (TC 2.A.66.1) family.

It is found in the membrane. This is an uncharacterized protein from Saccharomyces cerevisiae (strain ATCC 204508 / S288c) (Baker's yeast).